The primary structure comprises 421 residues: Probable tRNA N6-adenosine threonylcarbamoyltransferase, mitochondrial (421 aa).

The transit peptide at 1 to 22 directs the protein to the mitochondrion; sequence MNIPKILNNNLVLKRIFCRNYS. H133 and H137 together coordinate a divalent metal cation. Substrate-binding positions include 156 to 160, D189, G208, E212, 308 to 309, and T336; these read LLSGG and AN. An a divalent metal cation-binding site is contributed by D337.

Belongs to the KAE1 / TsaD family. As to quaternary structure, homodimer. Requires a divalent metal cation as cofactor.

The protein localises to the mitochondrion. The catalysed reaction is L-threonylcarbamoyladenylate + adenosine(37) in tRNA = N(6)-L-threonylcarbamoyladenosine(37) in tRNA + AMP + H(+). Its function is as follows. Required for the formation of a threonylcarbamoyl group on adenosine at position 37 (t(6)A37) in mitochondrial tRNAs that read codons beginning with adenine. Probably involved in the transfer of the threonylcarbamoyl moiety of threonylcarbamoyl-AMP (TC-AMP) to the N6 group of A37. Involved in mitochondrial genome maintenance. This is Probable tRNA N6-adenosine threonylcarbamoyltransferase, mitochondrial from Caenorhabditis elegans.